The primary structure comprises 657 residues: Glycogen debranching enzyme (657 aa).

The active-site Nucleophile is aspartate 336. Residue glutamate 371 is the Proton donor of the active site. A disordered region spans residues 460–479 (ANGEENRDGTNNNYSNNHGK).

It belongs to the glycosyl hydrolase 13 family.

It carries out the reaction Hydrolysis of (1-&gt;6)-alpha-D-glucosidic linkages to branches with degrees of polymerization of three or four glucose residues in limit dextrin.. It functions in the pathway glycan degradation; glycogen degradation. Functionally, removes maltotriose and maltotetraose chains that are attached by 1,6-alpha-linkage to the limit dextrin main chain, generating a debranched limit dextrin. This chain is Glycogen debranching enzyme, found in Shigella flexneri serotype 5b (strain 8401).